Consider the following 201-residue polypeptide: MKAKLTVSDSKKLFHEEFPYVIPGLYKRIVDEILVELNLLNHQNEFKQDYLFCIGLTETFKELTKGYKPEKHLDLLFESLCISTNFEAKEIKEISKISQKEFSDKSSKDILKLLKEKSNSKLYPSRILNLGIYILISNSQDFKENNDIEKNKMISDIFEKLSLSRNKAEKDIGIYKSSISKMEQAKELIQEQRIKDKKKTL.

A coiled-coil region spans residues 174 to 201 (IYKSSISKMEQAKELIQEQRIKDKKKTL).

This sequence belongs to the THF1 family.

Functionally, may be involved in photosynthetic membrane biogenesis. The protein is Protein Thf1 of Prochlorococcus marinus (strain MIT 9312).